Consider the following 933-residue polypeptide: DNA replication licensing factor MCM4 (933 aa).

Disordered regions lie at residues 1 to 149 (MSQQ…PRRI) and 154 to 173 (TRSGVNTLDTSSSSAPPSEA). The span at 27–42 (PPQLSSPALFYSSSSS) shows a compositional bias: low complexity. Composition is skewed to polar residues over residues 49 to 59 (RNNSQNLSQGE) and 69 to 85 (SPLNFPSSSQRQNSDVF). Ser52, Ser56, and Ser69 each carry phosphoserine. Low complexity predominate over residues 86 to 103 (QSQGRQGRIRSSASASGR). Polar residues predominate over residues 117 to 129 (PTSSSSLGRNGQN). A compositionally biased stretch (low complexity) spans 164–173 (SSSSAPPSEA). One can recognise an MCM domain in the interval 518-725 (LYSLLARSIA…NDRELAKHLT (208 aa)). Position 568–575 (568–575 (GDPSTSKS)) interacts with ATP. The Arginine finger signature appears at 700–703 (SRFD).

Belongs to the MCM family. In terms of assembly, component of the MCM2-7 complex. The complex forms a toroidal hexameric ring with the proposed subunit order MCM2-MCM6-MCM4-MCM7-MCM3-MCM5; loaded onto DNA, forms a head-head double hexamer.

The protein localises to the nucleus. It carries out the reaction ATP + H2O = ADP + phosphate + H(+). Acts as a component of the MCM2-7 complex (MCM complex) which is the putative replicative helicase essential for 'once per cell cycle' DNA replication initiation and elongation in eukaryotic cells. The active ATPase sites in the MCM2-7 ring are formed through the interaction surfaces of two neighboring subunits such that a critical structure of a conserved arginine finger motif is provided in trans relative to the ATP-binding site of the Walker A box of the adjacent subunit. The six ATPase active sites, however, are likely to contribute differentially to the complex helicase activity. Once loaded onto DNA, double hexamers can slide on dsDNA in the absence of ATPase activity. Required for S phase execution. This is DNA replication licensing factor MCM4 (MCM4) from Saccharomyces cerevisiae (strain ATCC 204508 / S288c) (Baker's yeast).